A 714-amino-acid polypeptide reads, in one-letter code: Polyribonucleotide nucleotidyltransferase (714 aa).

Mg(2+)-binding residues include Asp488 and Asp494. In terms of domain architecture, KH spans 555–614; the sequence is PRIEVMNIPVDKIREVIGSGGKVIREIVEKTGAKINIDDDGTVKIASASGKEIEAARKWI. Positions 624–692 constitute an S1 motif domain; it reads GQVYEGTVVK…ERGKVRLSMK (69 aa).

The protein belongs to the polyribonucleotide nucleotidyltransferase family. Requires Mg(2+) as cofactor.

The protein resides in the cytoplasm. It catalyses the reaction RNA(n+1) + phosphate = RNA(n) + a ribonucleoside 5'-diphosphate. Functionally, involved in mRNA degradation. Catalyzes the phosphorolysis of single-stranded polyribonucleotides processively in the 3'- to 5'-direction. This Sinorhizobium medicae (strain WSM419) (Ensifer medicae) protein is Polyribonucleotide nucleotidyltransferase.